The chain runs to 229 residues: C-&gt;U-editing enzyme APOBEC-1 (229 aa).

Residues 10–134 (VDPTLRRRIE…QRNRQGLRDL (125 aa)) form the CMP/dCMP-type deaminase domain. Zn(2+) is bound at residue His61. Glu63 serves as the catalytic Proton donor. Zn(2+) is bound by residues Cys93 and Cys96.

Belongs to the cytidine and deoxycytidylate deaminase family. Homodimer. Interacts with A1CF; form an mRNA editing complex. Interacts with RBM47; form an mRNA editing complex. Found in a complex with CELF2/CUGBP2 and A1CF. Interacts with HNRPAB. Interacts with SYNCRIP. Zn(2+) is required as a cofactor. In terms of tissue distribution, expressed in the spleen. Expressed at lower level in the kidney, testis, lung, brain and liver.

Its subcellular location is the cytoplasm. The protein localises to the nucleus. The catalysed reaction is a cytidine in mRNA + H2O + H(+) = a uridine in mRNA + NH4(+). It catalyses the reaction cytidine(6666) in apoB mRNA + H2O + H(+) = uridine(6666) in apoB mRNA + NH4(+). In terms of biological role, cytidine deaminase catalyzing the cytidine to uridine postranscriptional editing of a variety of mRNAs. Form complexes with cofactors that confer differential editing activity and selectivity. Responsible for the postranscriptional editing of a CAA codon for Gln to a UAA codon for stop in the apolipoprotein B mRNA. Also involved in CGA (Arg) to UGA (Stop) editing in the NF1 mRNA. May also play a role in the epigenetic regulation of gene expression by participating in DNA demethylation. This chain is C-&gt;U-editing enzyme APOBEC-1, found in Mus musculus (Mouse).